Here is a 257-residue protein sequence, read N- to C-terminus: tRNA pseudouridine synthase A (257 aa).

D52 serves as the catalytic Nucleophile. Y111 is a binding site for substrate.

Belongs to the tRNA pseudouridine synthase TruA family. As to quaternary structure, homodimer.

It carries out the reaction uridine(38/39/40) in tRNA = pseudouridine(38/39/40) in tRNA. In terms of biological role, formation of pseudouridine at positions 38, 39 and 40 in the anticodon stem and loop of transfer RNAs. In Dinoroseobacter shibae (strain DSM 16493 / NCIMB 14021 / DFL 12), this protein is tRNA pseudouridine synthase A.